A 130-amino-acid chain; its full sequence is Large ribosomal subunit protein bL20c (130 aa).

This sequence belongs to the bacterial ribosomal protein bL20 family.

The protein resides in the plastid. Its subcellular location is the chloroplast. Functionally, binds directly to 23S ribosomal RNA and is necessary for the in vitro assembly process of the 50S ribosomal subunit. It is not involved in the protein synthesizing functions of that subunit. The protein is Large ribosomal subunit protein bL20c (rpl20) of Glycine max (Soybean).